The following is a 311-amino-acid chain: Aspartate carbamoyltransferase catalytic subunit (311 aa).

Residues arginine 55 and threonine 56 each contribute to the carbamoyl phosphate site. Lysine 85 serves as a coordination point for L-aspartate. Residues arginine 106, histidine 135, and glutamine 138 each coordinate carbamoyl phosphate. 2 residues coordinate L-aspartate: arginine 168 and arginine 230. Residues leucine 268 and proline 269 each contribute to the carbamoyl phosphate site.

This sequence belongs to the aspartate/ornithine carbamoyltransferase superfamily. ATCase family. Heterododecamer (2C3:3R2) of six catalytic PyrB chains organized as two trimers (C3), and six regulatory PyrI chains organized as three dimers (R2).

The catalysed reaction is carbamoyl phosphate + L-aspartate = N-carbamoyl-L-aspartate + phosphate + H(+). It participates in pyrimidine metabolism; UMP biosynthesis via de novo pathway; (S)-dihydroorotate from bicarbonate: step 2/3. In terms of biological role, catalyzes the condensation of carbamoyl phosphate and aspartate to form carbamoyl aspartate and inorganic phosphate, the committed step in the de novo pyrimidine nucleotide biosynthesis pathway. In Proteus mirabilis (strain HI4320), this protein is Aspartate carbamoyltransferase catalytic subunit.